The sequence spans 208 residues: dITP/XTP pyrophosphatase (208 aa).

Serine 15–lysine 20 serves as a coordination point for substrate. 2 residues coordinate Mg(2+): glutamate 47 and aspartate 76. The active-site Proton acceptor is the aspartate 76. Residues serine 77, histidine 157–aspartate 160, lysine 180, and histidine 185–arginine 186 contribute to the substrate site.

The protein belongs to the HAM1 NTPase family. In terms of assembly, homodimer. Mg(2+) serves as cofactor.

It carries out the reaction XTP + H2O = XMP + diphosphate + H(+). The enzyme catalyses dITP + H2O = dIMP + diphosphate + H(+). The catalysed reaction is ITP + H2O = IMP + diphosphate + H(+). In terms of biological role, pyrophosphatase that catalyzes the hydrolysis of nucleoside triphosphates to their monophosphate derivatives, with a high preference for the non-canonical purine nucleotides XTP (xanthosine triphosphate), dITP (deoxyinosine triphosphate) and ITP. Seems to function as a house-cleaning enzyme that removes non-canonical purine nucleotides from the nucleotide pool, thus preventing their incorporation into DNA/RNA and avoiding chromosomal lesions. In Gluconobacter oxydans (strain 621H) (Gluconobacter suboxydans), this protein is dITP/XTP pyrophosphatase.